Reading from the N-terminus, the 149-residue chain is Large ribosomal subunit protein bL9 (149 aa).

Belongs to the bacterial ribosomal protein bL9 family.

Binds to the 23S rRNA. This is Large ribosomal subunit protein bL9 from Shewanella amazonensis (strain ATCC BAA-1098 / SB2B).